Reading from the N-terminus, the 56-residue chain is Large ribosomal subunit protein bL32 (56 aa).

Positions 1–16 (MAVQKSKKSRAARGMR) are enriched in basic residues. The segment at 1–22 (MAVQKSKKSRAARGMRRSHDAL) is disordered.

It belongs to the bacterial ribosomal protein bL32 family.

This chain is Large ribosomal subunit protein bL32, found in Photobacterium profundum (strain SS9).